The following is a 100-amino-acid chain: Large ribosomal subunit protein uL23 (100 aa).

This sequence belongs to the universal ribosomal protein uL23 family. Part of the 50S ribosomal subunit. Contacts protein L29, and trigger factor when it is bound to the ribosome.

One of the early assembly proteins it binds 23S rRNA. One of the proteins that surrounds the polypeptide exit tunnel on the outside of the ribosome. Forms the main docking site for trigger factor binding to the ribosome. This is Large ribosomal subunit protein uL23 from Mycobacterium leprae (strain Br4923).